A 271-amino-acid polypeptide reads, in one-letter code: Sedoheptulose 1,7-bisphosphatase (271 aa).

Arginine 12 lines the substrate pocket. Histidine 13 functions as the Tele-phosphohistidine intermediate in the catalytic mechanism. Residues 24–25 (YT), arginine 69, 99–102 (EWEY), arginine 181, and histidine 244 contribute to the substrate site. Glutamate 99 serves as the catalytic Proton donor/acceptor.

Belongs to the phosphoglycerate mutase family. SHB17 subfamily. Homodimer.

It is found in the cytoplasm. Its subcellular location is the nucleus. The enzyme catalyses D-sedoheptulose 1,7-bisphosphate + H2O = D-sedoheptulose 7-phosphate + phosphate. Functionally, sedoheptulose 1,7-bisphosphatase involved in riboneogenesis. Dephosphorylates sedoheptulose 1,7-bisphosphate (SBP), which is converted via the non-oxidative pentose phosphate pathway to ribose-5-phosphate. Has a fructose 1,6-bisphosphatase activity in vitro, but this is probably not biologically relevant, since deletion does not affect fructose 1,6-biphosphate (FBP) levels. The protein is Sedoheptulose 1,7-bisphosphatase (SHB17) of Saccharomyces cerevisiae (strain ATCC 204508 / S288c) (Baker's yeast).